A 553-amino-acid chain; its full sequence is Formate--tetrahydrofolate ligase (553 aa).

Residue 62-69 (TPAGEGKS) coordinates ATP.

This sequence belongs to the formate--tetrahydrofolate ligase family.

The catalysed reaction is (6S)-5,6,7,8-tetrahydrofolate + formate + ATP = (6R)-10-formyltetrahydrofolate + ADP + phosphate. It participates in one-carbon metabolism; tetrahydrofolate interconversion. The sequence is that of Formate--tetrahydrofolate ligase from Limosilactobacillus reuteri subsp. reuteri (strain JCM 1112) (Lactobacillus reuteri).